Reading from the N-terminus, the 230-residue chain is Ion-translocating oxidoreductase complex subunit E (230 aa).

6 helical membrane-spanning segments follow: residues 18–38 (ALVQ…ITNA), 39–59 (LGLG…VSLI), 69–89 (IPVF…LMNA), 93–113 (GLYL…IIIG), 124–144 (VLPA…VLVV), and 182–202 (SFLL…LIAL).

The protein belongs to the NqrDE/RnfAE family. In terms of assembly, the complex is composed of six subunits: RnfA, RnfB, RnfC, RnfD, RnfE and RnfG.

It is found in the cell inner membrane. Functionally, part of a membrane-bound complex that couples electron transfer with translocation of ions across the membrane. The sequence is that of Ion-translocating oxidoreductase complex subunit E from Vibrio parahaemolyticus serotype O3:K6 (strain RIMD 2210633).